We begin with the raw amino-acid sequence, 301 residues long: Hydroxymethylglutaryl-CoA lyase (301 aa).

One can recognise a Pyruvate carboxyltransferase domain in the interval 4-271; it reads VKVFEVGPRD…STGVDLEAVA (268 aa). R12 is a substrate binding site. Residues D13, H204, and H206 each contribute to the a divalent metal cation site. C237 is an active-site residue. An a divalent metal cation-binding site is contributed by N246.

This sequence belongs to the HMG-CoA lyase family.

The enzyme catalyses (3S)-3-hydroxy-3-methylglutaryl-CoA = acetoacetate + acetyl-CoA. The protein operates within metabolic intermediate metabolism; (S)-3-hydroxy-3-methylglutaryl-CoA degradation; acetoacetate from (S)-3-hydroxy-3-methylglutaryl-CoA: step 1/1. Its function is as follows. Involved in the catabolism of branched amino acids such as leucine. In Pseudomonas mevalonii, this protein is Hydroxymethylglutaryl-CoA lyase (mvaB).